The primary structure comprises 363 residues: Chorismate synthase (363 aa).

The disordered stretch occupies residues 36–58 (SESDIQGDLDRRRPGQSKITTPR). Arg47 serves as a coordination point for NADP(+). FMN is bound by residues 124–126 (RSS), Gly286, 301–305 (KPTAT), and Arg327.

The protein belongs to the chorismate synthase family. Homotetramer. Requires FMNH2 as cofactor.

The enzyme catalyses 5-O-(1-carboxyvinyl)-3-phosphoshikimate = chorismate + phosphate. It participates in metabolic intermediate biosynthesis; chorismate biosynthesis; chorismate from D-erythrose 4-phosphate and phosphoenolpyruvate: step 7/7. Functionally, catalyzes the anti-1,4-elimination of the C-3 phosphate and the C-6 proR hydrogen from 5-enolpyruvylshikimate-3-phosphate (EPSP) to yield chorismate, which is the branch point compound that serves as the starting substrate for the three terminal pathways of aromatic amino acid biosynthesis. This reaction introduces a second double bond into the aromatic ring system. In Crocosphaera subtropica (strain ATCC 51142 / BH68) (Cyanothece sp. (strain ATCC 51142)), this protein is Chorismate synthase.